Consider the following 571-residue polypeptide: Kelch-like protein 28 (571 aa).

The 68-residue stretch at 35 to 102 (CDIILRVGDV…AYTGTVFISQ (68 aa)) folds into the BTB domain. Kelch repeat units follow at residues 284–331 (VLCA…VLDQ), 332–386 (KVYV…VLAG), 387–433 (ELYA…VLDG), 435–479 (IYAI…VMLG), 480–526 (FIFV…VIDN), and 528–570 (LYVV…GLTA).

The protein is Kelch-like protein 28 (KLHL28) of Homo sapiens (Human).